The chain runs to 272 residues: Indole-3-glycerol phosphate synthase (272 aa).

Belongs to the TrpC family.

It catalyses the reaction 1-(2-carboxyphenylamino)-1-deoxy-D-ribulose 5-phosphate + H(+) = (1S,2R)-1-C-(indol-3-yl)glycerol 3-phosphate + CO2 + H2O. It participates in amino-acid biosynthesis; L-tryptophan biosynthesis; L-tryptophan from chorismate: step 4/5. The sequence is that of Indole-3-glycerol phosphate synthase from Mycolicibacterium paratuberculosis (strain ATCC BAA-968 / K-10) (Mycobacterium paratuberculosis).